Reading from the N-terminus, the 258-residue chain is Indole-3-glycerol phosphate synthase (258 aa).

Belongs to the TrpC family.

It catalyses the reaction 1-(2-carboxyphenylamino)-1-deoxy-D-ribulose 5-phosphate + H(+) = (1S,2R)-1-C-(indol-3-yl)glycerol 3-phosphate + CO2 + H2O. It participates in amino-acid biosynthesis; L-tryptophan biosynthesis; L-tryptophan from chorismate: step 4/5. This Campylobacter jejuni (strain RM1221) protein is Indole-3-glycerol phosphate synthase.